A 450-amino-acid chain; its full sequence is FAD-dependent monooxygenase okaB (450 aa).

Residues 14–34 (IVIIIVGLGIAGLSAAIECHG) form a helical membrane-spanning segment. Positions 43 and 116 each coordinate FAD. The active site involves Arg194. Positions 318 and 331 each coordinate FAD.

It belongs to the paxM FAD-dependent monooxygenase family.

The protein resides in the membrane. It carries out the reaction cyclo(N(8)-(alpha,alpha-dimethylallyl)-L-Trp-6a-(alpha,alpha-dimethylallyl)-L-Trp) + AH2 + O2 = okaramine C + A + H2O. It participates in alkaloid biosynthesis. FAD-dependent monooxygenase; part of the gene cluster that mediates the biosynthesis of okaramine B, a prenylated indole alkaloid that possesses an unusual octacyclic ring system, including a four-membered azetidine ring and an eight-membered azocine ring, and that exhibits insecticidal activity against silkworm larvae. Within the pathway, okaC performs indole 2,3-epoxidation, facilitating the formation of the hexahydropyrrolo[2,3-b]indole (HPI) moiety of okaramine C. okaC then performs asymmetric reverse prenylation of cyclo(L-Trp-L-Trp) at N-1 and C-2' of the indole ring to produce the cyclic prenylated tryptophan dimer cyclo(N8-(alpha,alpha-dimethylallyl)-L-Trp-6a-(alpha,alpha-dime-thylallyl)-L-Trp). The biosynthesis begins with the NRPS okaA that condenses two tryptophan molecules into cyclo(L-Trp-L-Trp). Prenylation by the prenyltransferase okaC then leads to the formation of cyclo(N8-(alpha,alpha-dimethylallyl)-L-Trp-6a-(alpha,alpha-dime-thylallyl)-L-Trp). This is followed by indole 2,3-epoxidation by the FAD-dependent monooxygenase okaB to facilitate the formation of the hexahydropyrrolo[2,3-b]indole (HPI) moiety of okaramine C. The cytochrome P450 monooxygenase okaD then likely catalyzes formation of the eight-membered ring of okaramine A. The dioxygenase okaE further forms the unusual 2-dimethyl-3-methyl-azetidine ring to yield 12-deshydroxyl okaramine E, as well as the hydroxylation of 12-deshydroxyl okaramine E to produce okaramine E. The cytochrome P450 monoxygenase okaG converts 12-deshydroxyl okaramine E into 3-desmethyl okaramine B which is further methylated by the methyltransferase okaF into okaramine B. In a shunt pathway, okaG and okaF together are also able to convert okaramine E into okaramine D. Okaramine H is produced by nonenzymatic conversion from okaramine A. The protein is FAD-dependent monooxygenase okaB of Penicillium ochrochloron.